We begin with the raw amino-acid sequence, 357 residues long: 3-isopropylmalate dehydrogenase (357 aa).

NAD(+) is bound at residue 76–89 (GPQWDTIDPALRPE). Substrate contacts are provided by arginine 96, arginine 106, arginine 134, and aspartate 224. Aspartate 224, aspartate 248, and aspartate 252 together coordinate Mg(2+). Residue 282–294 (GSAPDIAGQGIAN) participates in NAD(+) binding.

It belongs to the isocitrate and isopropylmalate dehydrogenases family. LeuB type 1 subfamily. Homodimer. The cofactor is Mg(2+). Requires Mn(2+) as cofactor.

Its subcellular location is the cytoplasm. The catalysed reaction is (2R,3S)-3-isopropylmalate + NAD(+) = 4-methyl-2-oxopentanoate + CO2 + NADH. It participates in amino-acid biosynthesis; L-leucine biosynthesis; L-leucine from 3-methyl-2-oxobutanoate: step 3/4. Functionally, catalyzes the oxidation of 3-carboxy-2-hydroxy-4-methylpentanoate (3-isopropylmalate) to 3-carboxy-4-methyl-2-oxopentanoate. The product decarboxylates to 4-methyl-2 oxopentanoate. This chain is 3-isopropylmalate dehydrogenase, found in Xanthomonas campestris pv. campestris (strain 8004).